A 914-amino-acid polypeptide reads, in one-letter code: Zinc finger protein 717 (914 aa).

The KRAB domain occupies 22–93; that stretch reads VSFEEVAVHF…EETPNLRLSA (72 aa). The C2H2-type 1; degenerate zinc finger occupies 209-231; it reads FQCNEQGKTFNTEAMFFIHKRVH. Residues 266 to 277 form a C2H2-type 2; degenerate zinc finger; sequence RKSDFTKHQQTH. The C2H2-type 3; degenerate zinc finger occupies 283–305; the sequence is YECVECEKPSISKSDLMLQCKMP. 12 C2H2-type zinc fingers span residues 311–333, 339–361, 367–389, 395–417, 423–445, 451–473, 479–501, 507–529, 535–557, 563–585, 591–613, and 619–641; these read YACN…QRIH, YGCN…ERTH, YKCI…HRTH, YQCS…HRTH, YACD…QRTH, YECN…QRTH, YECN…QWTH, YACN…HRTH, YECN…KRTH, and YECN…QGTH. The C2H2-type 16; degenerate zinc-finger motif lies at 649 to 669; it reads CNECGKTFHRKSFLTIHQRTH. The C2H2-type 17; degenerate zinc finger occupies 741–752; sequence QKSVLTVHHRTH. 5 C2H2-type zinc fingers span residues 758–780, 786–808, 814–836, 842–864, and 870–892; these read YECN…QGTH, YECD…QRTH, FECK…HRTH, FRCN…QRTH, and YECK…QQTH.

It belongs to the krueppel C2H2-type zinc-finger protein family.

It localises to the nucleus. Its function is as follows. May be involved in transcriptional regulation. The protein is Zinc finger protein 717 of Homo sapiens (Human).